Here is an 82-residue protein sequence, read N- to C-terminus: Small ribosomal subunit protein bS16 (82 aa).

Belongs to the bacterial ribosomal protein bS16 family.

The chain is Small ribosomal subunit protein bS16 from Yersinia enterocolitica serotype O:8 / biotype 1B (strain NCTC 13174 / 8081).